Reading from the N-terminus, the 79-residue chain is Large ribosomal subunit protein uL29 (79 aa).

This sequence belongs to the universal ribosomal protein uL29 family.

The chain is Large ribosomal subunit protein uL29 from Nocardia farcinica (strain IFM 10152).